Consider the following 125-residue polypeptide: Small ribosomal subunit protein uS13 (125 aa).

This sequence belongs to the universal ribosomal protein uS13 family. In terms of assembly, part of the 30S ribosomal subunit. Forms a loose heterodimer with protein S19. Forms two bridges to the 50S subunit in the 70S ribosome.

In terms of biological role, located at the top of the head of the 30S subunit, it contacts several helices of the 16S rRNA. In the 70S ribosome it contacts the 23S rRNA (bridge B1a) and protein L5 of the 50S subunit (bridge B1b), connecting the 2 subunits; these bridges are implicated in subunit movement. Contacts the tRNAs in the A and P-sites. The protein is Small ribosomal subunit protein uS13 of Rickettsia africae (strain ESF-5).